A 1131-amino-acid chain; its full sequence is Probable secreted beta-glucosidase adg3 (1131 aa).

Positions 1-23 (MPSKIEKICLLLLGFTAASNVNA) are cleaved as a signal peptide. Residues Asn58, Asn123, Asn252, Asn551, Asn593, Asn631, and Asn689 are each glycosylated (N-linked (GlcNAc...) asparagine). The disordered stretch occupies residues 609–819 (GTTSSTSEIV…SSPISSNSVT (211 aa)). Residues 623–715 (SNSNTGSLNG…YSDPTTTITS (93 aa)) show a composition bias toward low complexity. The span at 716–725 (EVSSILSSPT) shows a compositional bias: polar residues. The segment covering 726 to 737 (SMQSSVSRPQSS) has biased composition (low complexity). Residues 738 to 763 (GDASGFNTIFTSISQSSDGETSGYTI) are compositionally biased toward polar residues. Composition is skewed to low complexity over residues 764–773 (SSNSSQNSAS) and 780–819 (TSSSSSATPTITQSSISTSVSSQSSMNSSYSSPISSNSVT). Residues Asn766, Asn806, and Asn857 are each glycosylated (N-linked (GlcNAc...) asparagine). The segment covering 893–909 (STSNSGSTSYSIPSSSS) has biased composition (low complexity). A disordered region spans residues 893–918 (STSNSGSTSYSIPSSSSRNEGTTSYS). N-linked (GlcNAc...) asparagine glycosylation occurs at Asn920. Over residues 977-1027 (LTVKPESSLSSSTTSGLTSSSSTIPSSTRSESNSESASTSSASKRSSSSTS) the composition is skewed to low complexity. The interval 977–1031 (LTVKPESSLSSSTTSGLTSSSSTIPSSTRSESNSESASTSSASKRSSSSTSLVQS) is disordered.

Belongs to the SUN family.

It localises to the secreted. Functionally, cell surface beta-glucosidase involved in cell wall biogenesis,. In Schizosaccharomyces pombe (strain 972 / ATCC 24843) (Fission yeast), this protein is Probable secreted beta-glucosidase adg3 (adg3).